The chain runs to 304 residues: Homoserine kinase (304 aa).

An ATP-binding site is contributed by 91 to 101 (PLGKGMGSSAA).

Belongs to the GHMP kinase family. Homoserine kinase subfamily.

It is found in the cytoplasm. It catalyses the reaction L-homoserine + ATP = O-phospho-L-homoserine + ADP + H(+). Its pathway is amino-acid biosynthesis; L-threonine biosynthesis; L-threonine from L-aspartate: step 4/5. Its function is as follows. Catalyzes the ATP-dependent phosphorylation of L-homoserine to L-homoserine phosphate. This Solibacter usitatus (strain Ellin6076) protein is Homoserine kinase.